The following is a 190-amino-acid chain: MKRFMQIWKPAVIGFLLLTLVCGVLYPGVVTVFAGVAFHDKANGSIIEEKLADGTTGKVGSAEIGQTFTEPEYLIGRAASDGVATNLNPTSEEQKQLVEKRIAWWHKLDPTNNRVIPMDLVTASASGVDPDISEAAAAYQVDRISRERGISTKEVKEIIAEHTSNRLLGFWGEPTVNVLQVNLALDRLKM.

Residues 13 to 33 (IGFLLLTLVCGVLYPGVVTVF) traverse the membrane as a helical segment.

This sequence belongs to the KdpC family. The system is composed of three essential subunits: KdpA, KdpB and KdpC.

The protein resides in the cell membrane. Functionally, part of the high-affinity ATP-driven potassium transport (or Kdp) system, which catalyzes the hydrolysis of ATP coupled with the electrogenic transport of potassium into the cytoplasm. This subunit acts as a catalytic chaperone that increases the ATP-binding affinity of the ATP-hydrolyzing subunit KdpB by the formation of a transient KdpB/KdpC/ATP ternary complex. The polypeptide is Potassium-transporting ATPase KdpC subunit (Listeria monocytogenes serovar 1/2a (strain ATCC BAA-679 / EGD-e)).